The sequence spans 274 residues: NAD-dependent protein deacetylase (274 aa).

One can recognise a Deacetylase sirtuin-type domain in the interval 1 to 274; that stretch reads MDSRMSDLQA…CDEVLAEVVS (274 aa). NAD(+) is bound by residues 26 to 46 and 104 to 107; these read GAGCSTASGIPDYRDGQGQWK and QNVD. H122 serves as the catalytic Proton acceptor. Residues C130, C133, C181, and C184 each contribute to the Zn(2+) site. Residues 221–223, 247–249, and C265 contribute to the NAD(+) site; these read GSS and NLG.

The protein belongs to the sirtuin family. Class II subfamily. Zn(2+) is required as a cofactor.

The protein localises to the cytoplasm. The catalysed reaction is N(6)-acetyl-L-lysyl-[protein] + NAD(+) + H2O = 2''-O-acetyl-ADP-D-ribose + nicotinamide + L-lysyl-[protein]. Functionally, NAD-dependent protein deacetylase which modulates the activities of several enzymes which are inactive in their acetylated form. The protein is NAD-dependent protein deacetylase of Bordetella bronchiseptica (strain ATCC BAA-588 / NCTC 13252 / RB50) (Alcaligenes bronchisepticus).